We begin with the raw amino-acid sequence, 245 residues long: Putative outer membrane protein RBE_0022 (245 aa).

A signal peptide spans 1-23 (MIRMSKRLGVILFVSCISINSFA).

It belongs to the OmpW/AlkL family.

Its subcellular location is the cell outer membrane. The chain is Putative outer membrane protein RBE_0022 from Rickettsia bellii (strain RML369-C).